Here is a 514-residue protein sequence, read N- to C-terminus: Cytochrome P450 monooxygenase verB (514 aa).

The helical transmembrane segment at 5-25 threads the bilayer; sequence WLSASVLITAVILLVDYLNYY. Heme is bound at residue cysteine 457.

This sequence belongs to the cytochrome P450 family. Heme serves as cofactor.

The protein resides in the membrane. Its pathway is mycotoxin biosynthesis. Cytochrome P450 monooxygenase; part of the gene cluster that mediates the biosynthesis of 11'-deoxyverticillin A, one of the dimeric epipolythiodioxopiperazines (ETPs) from the verticillin family that act as mycotoxins. 11'-deoxyverticillin A is required for normal conidiation. The nonribosomal peptide synthetase verP is speculated to be responsible for condensation of amino acids to form the carbon skeleton of verticillin, whereas the cluster-specific tailoring enzymes are involved in further modifications leading to the production of 11'-deoxyverticillin A. In Clonostachys rogersoniana, this protein is Cytochrome P450 monooxygenase verB.